Here is a 60-residue protein sequence, read N- to C-terminus: Large ribosomal subunit protein bL32 (60 aa).

The segment at Met1–Thr43 is disordered. Over residues Arg7 to Arg16 the composition is skewed to basic residues.

The protein belongs to the bacterial ribosomal protein bL32 family.

In Saccharophagus degradans (strain 2-40 / ATCC 43961 / DSM 17024), this protein is Large ribosomal subunit protein bL32.